The following is a 253-amino-acid chain: 5'/3'-nucleotidase SurE (253 aa).

A divalent metal cation contacts are provided by Asp8, Asp9, Ser39, and Asn92.

It belongs to the SurE nucleotidase family. A divalent metal cation serves as cofactor.

It is found in the cytoplasm. The enzyme catalyses a ribonucleoside 5'-phosphate + H2O = a ribonucleoside + phosphate. It carries out the reaction a ribonucleoside 3'-phosphate + H2O = a ribonucleoside + phosphate. The catalysed reaction is [phosphate](n) + H2O = [phosphate](n-1) + phosphate + H(+). Nucleotidase with a broad substrate specificity as it can dephosphorylate various ribo- and deoxyribonucleoside 5'-monophosphates and ribonucleoside 3'-monophosphates with highest affinity to 3'-AMP. Also hydrolyzes polyphosphate (exopolyphosphatase activity) with the preference for short-chain-length substrates (P20-25). Might be involved in the regulation of dNTP and NTP pools, and in the turnover of 3'-mononucleotides produced by numerous intracellular RNases (T1, T2, and F) during the degradation of various RNAs. In Shigella boydii serotype 18 (strain CDC 3083-94 / BS512), this protein is 5'/3'-nucleotidase SurE.